The following is a 30-amino-acid chain: Truncated interleukin-1-binding protein (30 aa).

An N-terminal signal peptide occupies residues 1–18; it reads MSILPVIFLPIFFYSSFV.

It belongs to the interleukin-1 receptor family.

This chain is Truncated interleukin-1-binding protein, found in Vaccinia virus (strain Copenhagen) (VACV).